The following is a 279-amino-acid chain: Acetyl-coenzyme A carboxylase carboxyl transferase subunit beta (279 aa).

The 257-residue stretch at 23–279 (MWWKCDECGA…IVRLMTMLAP (257 aa)) folds into the CoA carboxyltransferase N-terminal domain. The Zn(2+) site is built by Cys-27, Cys-30, Cys-46, and Cys-49. Residues 27 to 49 (CDECGAMLHKKQLEDNFYTCSEC) form a C4-type zinc finger.

This sequence belongs to the AccD/PCCB family. In terms of assembly, acetyl-CoA carboxylase is a heterohexamer composed of biotin carboxyl carrier protein (AccB), biotin carboxylase (AccC) and two subunits each of ACCase subunit alpha (AccA) and ACCase subunit beta (AccD). Requires Zn(2+) as cofactor.

It localises to the cytoplasm. It catalyses the reaction N(6)-carboxybiotinyl-L-lysyl-[protein] + acetyl-CoA = N(6)-biotinyl-L-lysyl-[protein] + malonyl-CoA. Its pathway is lipid metabolism; malonyl-CoA biosynthesis; malonyl-CoA from acetyl-CoA: step 1/1. In terms of biological role, component of the acetyl coenzyme A carboxylase (ACC) complex. Biotin carboxylase (BC) catalyzes the carboxylation of biotin on its carrier protein (BCCP) and then the CO(2) group is transferred by the transcarboxylase to acetyl-CoA to form malonyl-CoA. This is Acetyl-coenzyme A carboxylase carboxyl transferase subunit beta from Chlorobium phaeobacteroides (strain DSM 266 / SMG 266 / 2430).